The primary structure comprises 75 residues: MISTSSILVLVVLLACFMAANAQWGYGGYGRGYGGYGGYGRGYGGYGGYGRGYGGYGRGMYGGYGRPYGGYGWGK.

Residues 1-22 (MISTSSILVLVVLLACFMAANA) form the signal peptide. Tyrosine amide is present on residues Tyr-29, Tyr-39, Tyr-49, Tyr-56, and Tyr-64. Tryptophan amide is present on Trp-73.

This sequence belongs to the YARP (YGGW-amide related peptide) family. Expressed in hypoderm.

Its subcellular location is the secreted. Functionally, antimicrobial peptides that have antifungal activity against D.coniospora. Has weak antibacterial activity against Gram-positive bacteria M.luteus and Gram-negative E.coli. The chain is Neuropeptide-like protein 31 (nlp-31) from Caenorhabditis elegans.